Reading from the N-terminus, the 353-residue chain is Photosystem II protein D1 (353 aa).

Thr-2 is modified (N-acetylthreonine). Phosphothreonine is present on Thr-2. Transmembrane regions (helical) follow at residues 29–46, 118–133, and 142–156; these read YIGW…TATS, HFLL…EWEL, and WIAV…AATA. Chlorophyll a is bound at residue His-118. Tyr-126 serves as a coordination point for pheophytin a. Residues Asp-170 and Glu-189 each contribute to the [CaMn4O5] cluster site. Residues 197-218 form a helical membrane-spanning segment; it reads FHMLGVAGVFGGSLFSAMHGSL. Residue His-198 coordinates chlorophyll a. A quinone-binding positions include His-215 and 264-265; that span reads SF. His-215 serves as a coordination point for Fe cation. His-272 is a binding site for Fe cation. A helical membrane pass occupies residues 274-288; the sequence is FLAAWPVVGIWFTAL. 4 residues coordinate [CaMn4O5] cluster: His-332, Glu-333, Asp-342, and Ala-344. Positions 345–353 are excised as a propeptide; it reads AVEAPSING.

Belongs to the reaction center PufL/M/PsbA/D family. As to quaternary structure, PSII is composed of 1 copy each of membrane proteins PsbA, PsbB, PsbC, PsbD, PsbE, PsbF, PsbH, PsbI, PsbJ, PsbK, PsbL, PsbM, PsbT, PsbX, PsbY, PsbZ, Psb30/Ycf12, at least 3 peripheral proteins of the oxygen-evolving complex and a large number of cofactors. It forms dimeric complexes. It depends on The D1/D2 heterodimer binds P680, chlorophylls that are the primary electron donor of PSII, and subsequent electron acceptors. It shares a non-heme iron and each subunit binds pheophytin, quinone, additional chlorophylls, carotenoids and lipids. D1 provides most of the ligands for the Mn4-Ca-O5 cluster of the oxygen-evolving complex (OEC). There is also a Cl(-1) ion associated with D1 and D2, which is required for oxygen evolution. The PSII complex binds additional chlorophylls, carotenoids and specific lipids. as a cofactor. Tyr-161 forms a radical intermediate that is referred to as redox-active TyrZ, YZ or Y-Z. Post-translationally, C-terminally processed by CTPA; processing is essential to allow assembly of the oxygen-evolving complex and thus photosynthetic growth.

It localises to the plastid. The protein resides in the chloroplast thylakoid membrane. It catalyses the reaction 2 a plastoquinone + 4 hnu + 2 H2O = 2 a plastoquinol + O2. Functionally, photosystem II (PSII) is a light-driven water:plastoquinone oxidoreductase that uses light energy to abstract electrons from H(2)O, generating O(2) and a proton gradient subsequently used for ATP formation. It consists of a core antenna complex that captures photons, and an electron transfer chain that converts photonic excitation into a charge separation. The D1/D2 (PsbA/PsbD) reaction center heterodimer binds P680, the primary electron donor of PSII as well as several subsequent electron acceptors. The sequence is that of Photosystem II protein D1 from Chloranthus spicatus (Chulantree).